A 566-amino-acid chain; its full sequence is Mannitol 2-dehydrogenase (566 aa).

Residue 106 to 117 participates in NAD(+) binding; it reads IVHVGVGGFHRA.

Belongs to the mannitol dehydrogenase family. Monomer.

The enzyme catalyses D-mannitol + NAD(+) = D-fructose + NADH + H(+). Its function is as follows. Catalyzes the NAD(H)-dependent interconversion of D-fructose and D-mannitol in the mannitol metabolic pathway. The polypeptide is Mannitol 2-dehydrogenase (Pyrenophora tritici-repentis (strain Pt-1C-BFP) (Wheat tan spot fungus)).